Reading from the N-terminus, the 223-residue chain is Deoxyribose-phosphate aldolase (223 aa).

Aspartate 92 functions as the Proton donor/acceptor in the catalytic mechanism. Lysine 158 functions as the Schiff-base intermediate with acetaldehyde in the catalytic mechanism. Residue lysine 188 is the Proton donor/acceptor of the active site.

This sequence belongs to the DeoC/FbaB aldolase family. DeoC type 1 subfamily.

The protein localises to the cytoplasm. It catalyses the reaction 2-deoxy-D-ribose 5-phosphate = D-glyceraldehyde 3-phosphate + acetaldehyde. It functions in the pathway carbohydrate degradation; 2-deoxy-D-ribose 1-phosphate degradation; D-glyceraldehyde 3-phosphate and acetaldehyde from 2-deoxy-alpha-D-ribose 1-phosphate: step 2/2. In terms of biological role, catalyzes a reversible aldol reaction between acetaldehyde and D-glyceraldehyde 3-phosphate to generate 2-deoxy-D-ribose 5-phosphate. The protein is Deoxyribose-phosphate aldolase of Mycolicibacterium paratuberculosis (strain ATCC BAA-968 / K-10) (Mycobacterium paratuberculosis).